The sequence spans 86 residues: Putative antitoxin VapB36 (86 aa).

In terms of biological role, possibly the antitoxin component of a type II toxin-antitoxin (TA) system. Its cognate toxin is VapC36 (Potential). The protein is Putative antitoxin VapB36 (vapB36) of Mycobacterium tuberculosis (strain CDC 1551 / Oshkosh).